The chain runs to 156 residues: Succinate dehydrogenase assembly factor 2-A, mitochondrial (156 aa).

A mitochondrion-targeting transit peptide spans 1–24 (MLRQFLVSTAVRRVVVPSMAQTRC). Positions 35–62 (TPGEIVDYDDPPHIPVPEYPSRPDEPLE) are disordered.

This sequence belongs to the SDHAF2 family. Interacts with the flavoprotein subunit within the SDH catalytic dimer.

The protein localises to the mitochondrion matrix. Functionally, plays an essential role in the assembly of succinate dehydrogenase (SDH), an enzyme complex (also referred to as respiratory complex II) that is a component of both the tricarboxylic acid (TCA) cycle and the mitochondrial electron transport chain, and which couples the oxidation of succinate to fumarate with the reduction of ubiquinone (coenzyme Q) to ubiquinol. Required for flavinylation (covalent attachment of FAD) of the flavoprotein subunit of the SDH catalytic dimer. The chain is Succinate dehydrogenase assembly factor 2-A, mitochondrial from Drosophila ananassae (Fruit fly).